The primary structure comprises 2166 residues: Protein TIC236, chloroplastic (2166 aa).

The N-terminal 37 residues, 1–37 (MSLRLQNPFLSTPLLHGSFNRREKRINVARRAFRSKR), are a transit peptide targeting the chloroplast. Residues 38–101 (IYSEKKQNDW…RSLAPVWEEG (64 aa)) lie on the Stromal side of the membrane. The chain crosses the membrane as a helical span at residues 102-122 (LFFLRCSVFFAVISGVCLLVW). Over 123 to 2166 (YGQNKARVFV…LFEYSATSQD (2044 aa)) the chain is Chloroplast intermembrane. Positions 1611–1649 (MSEGEVSETDRGGAVKIPSWAKEKEDDEKRTSRDRSEER) are disordered. The segment covering 1631 to 1649 (AKEKEDDEKRTSRDRSEER) has biased composition (basic and acidic residues).

It belongs to the TamB family. In terms of assembly, part of the TIC complex, which can interact with components of the TOC complex to form a larger import complex. Interacts with the TOC complex component TOC75-3.

Its subcellular location is the plastid. It localises to the chloroplast inner membrane. The protein localises to the chloroplast intermembrane space. Its function is as follows. Part of the inner chloroplast membrane translocon complex (TIC) which associates with the outer chloroplast membrane translocon complex (TOC) and forms a supercomplex involved in protein precursor import into the chloroplast stroma. Required for the import of HSP93, TIC40 and RBCS protein precursors in the chloroplast stroma. Links the outer and inner membrane translocons of the chloroplast envelope. The chain is Protein TIC236, chloroplastic from Arabidopsis thaliana (Mouse-ear cress).